The sequence spans 267 residues: Hydroxyethylthiazole kinase 2 (267 aa).

M41 is a substrate binding site. K116 and T166 together coordinate ATP. G193 provides a ligand contact to substrate.

It belongs to the Thz kinase family. The cofactor is Mg(2+).

The catalysed reaction is 5-(2-hydroxyethyl)-4-methylthiazole + ATP = 4-methyl-5-(2-phosphooxyethyl)-thiazole + ADP + H(+). It functions in the pathway cofactor biosynthesis; thiamine diphosphate biosynthesis; 4-methyl-5-(2-phosphoethyl)-thiazole from 5-(2-hydroxyethyl)-4-methylthiazole: step 1/1. Its function is as follows. Catalyzes the phosphorylation of the hydroxyl group of 4-methyl-5-beta-hydroxyethylthiazole (THZ). This is Hydroxyethylthiazole kinase 2 from Streptococcus pneumoniae serotype 4 (strain ATCC BAA-334 / TIGR4).